Here is a 636-residue protein sequence, read N- to C-terminus: MVQASSHAESGHEGKQGASRSVGLLVAAVGVVYGDIGTSPLYTLKEVFTGGYGVSVNHDGVLGILSLILWSLLWVVSFKYVMFILRADNQGEGGTMALTALARRATAAYPRLRTLMVICGLIGASLFYGDSMITPAVSVLSAVEGVGLAFDGIDHWVVPISLVVLVALFLVQRHGTEKIGKLFGPIMVTWFLALGALGVHGISQSPEVLKAFNPAWAVNFFVVHPGIGVAILGAVVLALTGAEALYADMGHFGRKPIARAWFILVLPALVLNYFGQGALLLQNPEAARNPFYLLAPGWALLPLVGLATMATVIASQAVISGAFSLTRQAIQLGYIPRMQIQHTSSDEQGQIYIGAVNWTLMVGVVLLVIGFESSGALAAAYGVAVTGTMLITTVLVSAVMLLLWKWPPLLAVPILVGFLLVDGLFFAANVPKIAQGGAFPVLAGGVLYLLMSTWKRGKQILVERIDEGALPLPLFISSIRIQPPHRVEGTAVFLTARSDAVPHALLHNMLHNQVLHSQVVLLTVVSEDRPRVPEHERFEVEAYGDGFFRVLLHFGFMDEPDVPAALKLCHLDGLDFTPMRTTYFLSRETVIASRLEGMSRWRGNLFAFLLKNANGNLRFFNLPLNRVIELGTQVEI.

12 helical membrane passes run Val22 to Tyr42, Ile64 to Ile84, Leu115 to Pro135, Phe150 to Leu170, Leu182 to Ile202, Phe220 to Thr240, Trp261 to Leu281, Leu293 to Ile313, Ile351 to Phe371, Val383 to Leu403, Pro408 to Ala428, and Ile433 to Thr453.

The protein belongs to the HAK/KUP transporter (TC 2.A.72) family.

It is found in the cell inner membrane. The enzyme catalyses K(+)(in) + H(+)(in) = K(+)(out) + H(+)(out). Transport of potassium into the cell. Likely operates as a K(+):H(+) symporter. This chain is Probable potassium transport system protein Kup, found in Pseudomonas putida (strain ATCC 47054 / DSM 6125 / CFBP 8728 / NCIMB 11950 / KT2440).